We begin with the raw amino-acid sequence, 232 residues long: GFP-like fluorescent chromoprotein dsFP483 (232 aa).

The 2-iminomethyl-5-imidazolinone (Gln-Gly) cross-link spans 66–68; it reads QYG. Position 67 is a 2,3-didehydrotyrosine (Y67).

It belongs to the GFP family. Post-translationally, contains a chromophore consisting of modified amino acid residues. The chromophore is formed by autocatalytic backbone condensation between Xaa-N and Gly-(N+2), oxidation of Tyr-(N+1) to didehydrotyrosine, and formation of a double bond to the alpha-amino nitrogen of residue Xaa-N. Maturation of the chromophore requires nothing other than molecular oxygen. The precise stereochemistry of the tyrosine has not been determined. In terms of tissue distribution, oral disk.

Its function is as follows. Pigment protein that is green in color. In Discosoma striata (Striped mushroom), this protein is GFP-like fluorescent chromoprotein dsFP483.